The sequence spans 256 residues: tRNA (guanine-N(7)-)-methyltransferase (256 aa).

Residues 1–43 (MDVDPVNSEMELDNKPTCETVPGLPQKKHYRQRAHSNPHSDHD) are disordered. Positions 26 to 36 (QKKHYRQRAHS) are enriched in basic residues. S-adenosyl-L-methionine is bound by residues Gly-74, 97–98 (EI), 132–133 (NA), and Leu-152. Asp-155 is a catalytic residue. Position 230–232 (230–232 (TEE)) interacts with S-adenosyl-L-methionine.

The protein belongs to the class I-like SAM-binding methyltransferase superfamily. TrmB family.

It is found in the nucleus. The enzyme catalyses guanosine(46) in tRNA + S-adenosyl-L-methionine = N(7)-methylguanosine(46) in tRNA + S-adenosyl-L-homocysteine. It participates in tRNA modification; N(7)-methylguanine-tRNA biosynthesis. Functionally, catalyzes the formation of N(7)-methylguanine at position 46 (m7G46) in tRNA. The sequence is that of tRNA (guanine-N(7)-)-methyltransferase from Caenorhabditis briggsae.